Here is a 226-residue protein sequence, read N- to C-terminus: Ribose-5-phosphate isomerase A (226 aa).

Substrate-binding positions include 33-36 (TGST), 86-89 (DGAD), and 99-102 (KGGG). The active-site Proton acceptor is the Glu-108. Lys-126 lines the substrate pocket.

The protein belongs to the ribose 5-phosphate isomerase family. As to quaternary structure, homodimer.

It catalyses the reaction aldehydo-D-ribose 5-phosphate = D-ribulose 5-phosphate. It participates in carbohydrate degradation; pentose phosphate pathway; D-ribose 5-phosphate from D-ribulose 5-phosphate (non-oxidative stage): step 1/1. Its function is as follows. Catalyzes the reversible conversion of ribose-5-phosphate to ribulose 5-phosphate. This Bordetella parapertussis (strain 12822 / ATCC BAA-587 / NCTC 13253) protein is Ribose-5-phosphate isomerase A.